We begin with the raw amino-acid sequence, 401 residues long: Nodulation protein E (401 aa).

Residues Asp-2–Gln-400 enclose the Ketosynthase family 3 (KS3) domain. Catalysis depends on for beta-ketoacyl synthase activity residues Cys-162, His-294, and His-331. A helical membrane pass occupies residues His-329–Ile-348.

Belongs to the thiolase-like superfamily. Beta-ketoacyl-ACP synthases family.

It is found in the cell inner membrane. Functionally, proposed to synthesize NOD factor fatty acyl chain. Involved in the synthesis of a highly unsaturated fatty acid moiety, which forms part of a lipo-oligosaccharide that is responsible for host specificity. This chain is Nodulation protein E (nodE), found in Rhizobium leguminosarum bv. trifolii.